The following is a 266-amino-acid chain: Glucosamine-6-phosphate deaminase (266 aa).

D72 (proton acceptor; for enolization step) is an active-site residue. The active-site For ring-opening step is the D141. H143 functions as the Proton acceptor; for ring-opening step in the catalytic mechanism. E148 (for ring-opening step) is an active-site residue.

Belongs to the glucosamine/galactosamine-6-phosphate isomerase family. NagB subfamily. Homohexamer; trimer of disulfide-linked dimers.

The enzyme catalyses alpha-D-glucosamine 6-phosphate + H2O = beta-D-fructose 6-phosphate + NH4(+). It functions in the pathway amino-sugar metabolism; N-acetylneuraminate degradation; D-fructose 6-phosphate from N-acetylneuraminate: step 5/5. With respect to regulation, allosterically activated by N-acetylglucosamine 6-phosphate (GlcNAc6P). Functionally, catalyzes the reversible isomerization-deamination of glucosamine 6-phosphate (GlcN6P) to form fructose 6-phosphate (Fru6P) and ammonium ion. The protein is Glucosamine-6-phosphate deaminase of Escherichia coli O6:H1 (strain CFT073 / ATCC 700928 / UPEC).